The sequence spans 537 residues: Glutamyl-tRNA reductase, chloroplastic (537 aa).

A chloroplast-targeting transit peptide spans 1–48; it reads MMASTTSATAAGGAFAAAKTRAGSSAAGGGACARVAAGGRRRSGVVVR. Residues 134 to 137, Ser-194, 199 to 201, and Gln-205 contribute to the substrate site; these read TCNR and EGQ. Residue Cys-135 is the Nucleophile of the active site. 276 to 281 serves as a coordination point for NADP(+); the sequence is GAGKMG.

Belongs to the glutamyl-tRNA reductase family.

Its subcellular location is the plastid. The protein resides in the chloroplast. It carries out the reaction (S)-4-amino-5-oxopentanoate + tRNA(Glu) + NADP(+) = L-glutamyl-tRNA(Glu) + NADPH + H(+). It functions in the pathway porphyrin-containing compound metabolism; protoporphyrin-IX biosynthesis; 5-aminolevulinate from L-glutamyl-tRNA(Glu): step 1/2. Catalyzes the NADPH-dependent reduction of glutamyl-tRNA(Glu) to glutamate 1-semialdehyde (GSA). The polypeptide is Glutamyl-tRNA reductase, chloroplastic (Oryza sativa subsp. japonica (Rice)).